Reading from the N-terminus, the 347-residue chain is N-acetyl-gamma-glutamyl-phosphate reductase (347 aa).

C151 is an active-site residue.

It belongs to the NAGSA dehydrogenase family. Type 1 subfamily.

It localises to the cytoplasm. The enzyme catalyses N-acetyl-L-glutamate 5-semialdehyde + phosphate + NADP(+) = N-acetyl-L-glutamyl 5-phosphate + NADPH + H(+). Its pathway is amino-acid biosynthesis; L-arginine biosynthesis; N(2)-acetyl-L-ornithine from L-glutamate: step 3/4. Functionally, catalyzes the NADPH-dependent reduction of N-acetyl-5-glutamyl phosphate to yield N-acetyl-L-glutamate 5-semialdehyde. The sequence is that of N-acetyl-gamma-glutamyl-phosphate reductase from Corynebacterium diphtheriae (strain ATCC 700971 / NCTC 13129 / Biotype gravis).